We begin with the raw amino-acid sequence, 89 residues long: Small ribosomal subunit protein uS15 (89 aa).

The protein belongs to the universal ribosomal protein uS15 family. As to quaternary structure, part of the 30S ribosomal subunit. Forms a bridge to the 50S subunit in the 70S ribosome, contacting the 23S rRNA.

Functionally, one of the primary rRNA binding proteins, it binds directly to 16S rRNA where it helps nucleate assembly of the platform of the 30S subunit by binding and bridging several RNA helices of the 16S rRNA. In terms of biological role, forms an intersubunit bridge (bridge B4) with the 23S rRNA of the 50S subunit in the ribosome. This is Small ribosomal subunit protein uS15 from Pectobacterium carotovorum subsp. carotovorum (strain PC1).